The primary structure comprises 299 residues: GTPase Era (299 aa).

The Era-type G domain occupies 5 to 175 (RSGFVCFVGR…TDVLAGKLPP (171 aa)). Residues 13–20 (GRPNTGKS) are G1. Residue 13–20 (GRPNTGKS) participates in GTP binding. Positions 39–43 (QTTRH) are G2. Residues 60–63 (DTPG) form a G3 region. GTP contacts are provided by residues 60–64 (DTPGL) and 124–127 (TKID). The segment at 124–127 (TKID) is G4. The interval 154-156 (VSA) is G5. The 80-residue stretch at 206 to 285 (VRDELPHSLA…YLDLRVKIAK (80 aa)) folds into the KH type-2 domain.

Belongs to the TRAFAC class TrmE-Era-EngA-EngB-Septin-like GTPase superfamily. Era GTPase family. In terms of assembly, monomer.

Its subcellular location is the cell envelope. It is found in the secreted. The protein localises to the cell wall. Exhibits GTPase activity. Binds RNA but is probably not involved in ribosome assembly in mycobacteria. The polypeptide is GTPase Era (Mycobacterium sp. (strain JLS)).